The chain runs to 632 residues: Gamma-aminobutyric acid receptor subunit theta (632 aa).

A signal peptide spans 1 to 21 (MGIRGMLRAAVILLLIRTWLA). The Extracellular portion of the chain corresponds to 22–268 (EGNYPSPIPK…FQVQREVNSY (247 aa)). A glycan (N-linked (GlcNAc...) asparagine) is linked at Asn127. Cys183 and Cys197 are disulfide-bonded. A helical membrane pass occupies residues 269–289 (LVQVYWPTVLTTITSWISFWM). At 290 to 297 (NYDSSAAR) the chain is on the cytoplasmic side. Residues 298–315 (VTIGLTSMLILTTIDSHL) form a helical membrane-spanning segment. Residues 316-326 (RDKLPNISCIK) lie on the Extracellular side of the membrane. The helical transmembrane segment at 327–347 (AIDIYILVCLFFVFLSLLEYV) threads the bilayer. Residues 348–611 (YINYLFYSRG…DYVPKVDKWS (264 aa)) lie on the Cytoplasmic side of the membrane. 2 disordered regions span residues 410 to 458 (SPES…STSE) and 491 to 523 (HGVT…LHHG). The span at 413–425 (SLGSLTSTSEQAQ) shows a compositional bias: polar residues. The span at 426-439 (LATSESLSPLTSLS) shows a compositional bias: low complexity. Polar residues predominate over residues 448-458 (ESLSDLPSTSE). Residues 491 to 511 (HGVTHDHEDSNESLSSDERHG) are compositionally biased toward basic and acidic residues. The chain crosses the membrane as a helical span at residues 612 to 632 (RFLFPLAFGLFNIVYWVYHMY).

It belongs to the ligand-gated ion channel (TC 1.A.9) family. Gamma-aminobutyric acid receptor (TC 1.A.9.5) subfamily. GABRQ sub-subfamily. In terms of assembly, heteropentamer, formed by a combination of alpha (GABRA1-6), beta (GABRB1-3), gamma (GABRG1-3), delta (GABRD), epsilon (GABRE), rho (GABRR1-3), pi (GABRP) and theta (GABRQ) chains, each subunit exhibiting distinct physiological and pharmacological properties. As to expression, expressed in brain.

The protein localises to the postsynaptic cell membrane. Its subcellular location is the cell membrane. It carries out the reaction chloride(in) = chloride(out). Potentiated by etomidate, propofol, pregnanolone and pentobarbital. Functionally, theta subunit of the heteropentameric ligand-gated chloride channel gated by gamma-aminobutyric acid (GABA), a major inhibitory neurotransmitter in the brain. GABA-gated chloride channels, also named GABA(A) receptors (GABAAR), consist of five subunits arranged around a central pore and contain GABA active binding site(s) located at the alpha and beta subunit interfaces. When activated by GABA, GABAARs selectively allow the flow of chloride anions across the cell membrane down their electrochemical gradient. This chain is Gamma-aminobutyric acid receptor subunit theta, found in Homo sapiens (Human).